Reading from the N-terminus, the 318-residue chain is Glycine--tRNA ligase alpha subunit (318 aa).

The protein belongs to the class-II aminoacyl-tRNA synthetase family. Tetramer of two alpha and two beta subunits.

Its subcellular location is the cytoplasm. The catalysed reaction is tRNA(Gly) + glycine + ATP = glycyl-tRNA(Gly) + AMP + diphosphate. The chain is Glycine--tRNA ligase alpha subunit from Methylibium petroleiphilum (strain ATCC BAA-1232 / LMG 22953 / PM1).